The chain runs to 111 residues: Large ribosomal subunit protein bL20c (111 aa).

Belongs to the bacterial ribosomal protein bL20 family.

The protein resides in the plastid. It localises to the chloroplast. Its function is as follows. Binds directly to 23S ribosomal RNA and is necessary for the in vitro assembly process of the 50S ribosomal subunit. It is not involved in the protein synthesizing functions of that subunit. The protein is Large ribosomal subunit protein bL20c of Ostreococcus tauri.